We begin with the raw amino-acid sequence, 152 residues long: Small ribosomal subunit protein uS13 (152 aa).

At S2 the chain carries N-acetylserine. K91 participates in a covalent cross-link: Glycyl lysine isopeptide (Lys-Gly) (interchain with G-Cter in SUMO2). An N6-acetyllysine; alternate mark is found at K94 and K106. Residues K94 and K106 each participate in a glycyl lysine isopeptide (Lys-Gly) (interchain with G-Cter in SUMO2); alternate cross-link.

The protein belongs to the universal ribosomal protein uS13 family. As to quaternary structure, component of the small ribosomal subunit.

The protein resides in the cytoplasm. Its function is as follows. Component of the small ribosomal subunit. The ribosome is a large ribonucleoprotein complex responsible for the synthesis of proteins in the cell. This is Small ribosomal subunit protein uS13 (RPS18) from Homo sapiens (Human).